Reading from the N-terminus, the 638-residue chain is Zinc finger protein 143 (638 aa).

Met-1 is modified (N-acetylmethionine). A Glycyl lysine isopeptide (Lys-Gly) (interchain with G-Cter in SUMO2) cross-link involves residue Lys-213. 4 consecutive C2H2-type zinc fingers follow at residues 237-261 (FRCKYDGCGKLYTTAHHLKVHERSH), 267-291 (YQCEHSGCGKAFATGYGLKSHFRTH), 297-321 (YRCSEDNCTKSFKTSGDLQKHIRTH), and 327-351 (FKCPIEGCGRSFTTSNIRKVHIRTH). Thr-352 carries the post-translational modification Phosphothreonine. C2H2-type zinc fingers lie at residues 357-381 (YYCTEPGCGRAFASATNYKNHVRIH), 387-411 (YVCTVPGCDKRFTEYSSLYKHHVVH), and 417-440 (YNCNHCGKTYKQISTLAMHKRTAH). Lys-406 participates in a covalent cross-link: Glycyl lysine isopeptide (Lys-Gly) (interchain with G-Cter in SUMO2).

It belongs to the GLI C2H2-type zinc-finger protein family. Interacts with CHD8. Forms a complex with HCFC1 and ZNF143.

It localises to the nucleus. Transcriptional activator. Activates the gene for selenocysteine tRNA (tRNAsec). Binds to the SPH motif of small nuclear RNA (snRNA) gene promoters. Participates in efficient U6 RNA polymerase III transcription via its interaction with CHD8. In complex with HCFC1 and ZNF143, regulates the expression of several genes, including AP2S1, ESCO2, OPHN1, RBL1, UBXN8 and ZNF32. This Mus musculus (Mouse) protein is Zinc finger protein 143 (Znf143).